The primary structure comprises 874 residues: MFETTAKLRSAFLAYFETQGHQVVDSSSLVPHNDPTLLFTNAGMNQFKDVFLGMDKRSYSRAVSSQRCVRAGGKHNDLDNVGYTARHHTFFEMLGNFSFGDYFKEEAIRFAWTFLTETLKLPTERLCVTIYETDDEAFELWNKKIGVAAENIIRIGDNKGAPYASDNFWQMGDTGPCGPCSEIFYDHGDHIWGGRPGTPEEDGDRFIEIWNIVFMQYNRQADGAMLPLPKPSVDTGMGIERIAAIMQGVHSNYEIDIFKQLIAKTAEIIGVSDLENKSLRVIADHIRSCAFLIADGVMPSNEGRGYVLRRIIRRAVRHGNKLGATDTFFYKLVPTLISVMGDAAKGLVETQVIVEKALKAEEEQFARTLERGLGLLDNALNELSGKVLDGDTAFKLYDTYGFPVDLTADVCRERDITVDEAGFEAAMAEQRSRAQAAGNFGADYNKQLIIDEETQFCGYKGLSGEANVVALYLDGQAVNEVTQGQDAVVVLNNTPFYAESGGQVGDKGVLSAQGINFSVTDTQKFGQATGHQGKVLEGSIKVGTKLAAEVNKDLRQRTELNHSVTHLLHAALRQVIGTHVTQKGSLVNPERLRFDFAHFEGVKAAELKQVEELVNAQIRCNHELNTAEMAIDEAKEKGAMALFGEKYDEKVRVVTMGDFSIELCGGTHVGRTGDIGLFKITSEAGIAAGVRRIEAVTGAAAMAYVAEQQAMLDEAAGLLKSDSASVVAKLKAQLDKTKQLEKELSQLKDKLAAAASADMAGDAQDINGVKVLVKKLEGVDPGSLRGLQDELKQKLKSAIILLGTAKDGKVNLIAGVSNDLTAKVKAGELVAMVAQQVGGKGGGRPDMAQAGGTQVENLDAALASASTWIAERLA.

Residues His-562, His-566, Cys-664, and His-668 each contribute to the Zn(2+) site.

It belongs to the class-II aminoacyl-tRNA synthetase family. Zn(2+) is required as a cofactor.

The protein localises to the cytoplasm. It carries out the reaction tRNA(Ala) + L-alanine + ATP = L-alanyl-tRNA(Ala) + AMP + diphosphate. Its function is as follows. Catalyzes the attachment of alanine to tRNA(Ala) in a two-step reaction: alanine is first activated by ATP to form Ala-AMP and then transferred to the acceptor end of tRNA(Ala). Also edits incorrectly charged Ser-tRNA(Ala) and Gly-tRNA(Ala) via its editing domain. This Shewanella denitrificans (strain OS217 / ATCC BAA-1090 / DSM 15013) protein is Alanine--tRNA ligase.